The following is a 203-amino-acid chain: Glycerol-3-phosphate acyltransferase (203 aa).

The next 4 membrane-spanning stretches (helical) occupy residues 4 to 24 (MAVTMTIIAYLLGSISSAVLI), 80 to 100 (PVLLGVIAIAACLGHMYPLFF), 117 to 137 (PIGLDLTGMIMATWLLVAILF), and 139 to 159 (YSSLAALVTVLLAPMYTWMIK).

It belongs to the PlsY family. Probably interacts with PlsX.

The protein localises to the cell inner membrane. It catalyses the reaction an acyl phosphate + sn-glycerol 3-phosphate = a 1-acyl-sn-glycero-3-phosphate + phosphate. It functions in the pathway lipid metabolism; phospholipid metabolism. Catalyzes the transfer of an acyl group from acyl-phosphate (acyl-PO(4)) to glycerol-3-phosphate (G3P) to form lysophosphatidic acid (LPA). This enzyme utilizes acyl-phosphate as fatty acyl donor, but not acyl-CoA or acyl-ACP. The chain is Glycerol-3-phosphate acyltransferase from Vibrio vulnificus (strain YJ016).